Reading from the N-terminus, the 477-residue chain is Glycogen synthase (477 aa).

Position 15 (Lys-15) interacts with ADP-alpha-D-glucose.

This sequence belongs to the glycosyltransferase 1 family. Bacterial/plant glycogen synthase subfamily.

The catalysed reaction is [(1-&gt;4)-alpha-D-glucosyl](n) + ADP-alpha-D-glucose = [(1-&gt;4)-alpha-D-glucosyl](n+1) + ADP + H(+). Its pathway is glycan biosynthesis; glycogen biosynthesis. Functionally, synthesizes alpha-1,4-glucan chains using ADP-glucose. The protein is Glycogen synthase of Erwinia tasmaniensis (strain DSM 17950 / CFBP 7177 / CIP 109463 / NCPPB 4357 / Et1/99).